The following is a 417-amino-acid chain: Snake venom metalloproteinase kistomin (417 aa).

The first 20 residues, 1–20 (MIEVLLVTICLAAFPYQGSS), serve as a signal peptide directing secretion. The propeptide occupies 21–189 (IILESGNVND…KKPFRLNLTP (169 aa)). Residues 197–391 (AKVYLVIVAD…RKPECLFKKP (195 aa)) form the Peptidase M12B domain. Cystine bridges form between cysteine 308/cysteine 386, cysteine 348/cysteine 370, and cysteine 350/cysteine 353. Zn(2+) is bound at residue histidine 333. Residue glutamate 334 is part of the active site. Zn(2+)-binding residues include histidine 337 and histidine 343. A propeptide spanning residues 392-417 (LRTDTVSTPVSGNEPLEVITMDDFYA) is cleaved from the precursor.

It belongs to the venom metalloproteinase (M12B) family. P-I subfamily. As to quaternary structure, monomer. The cofactor is Zn(2+). In terms of tissue distribution, expressed by the venom gland.

The protein localises to the secreted. Its activity is regulated as follows. Inhibited by EDTA, and O-phenanthrolene. Functionally, snake venom zinc metalloprotease that inhibits platelet aggregation by binding specifically to platelet glycoprotein VI (GP6) and platelet glycoprotein Ib alpha (GP1BA). It inhibits the interaction between collagen and platelet GP6 by cleaving GP6 (at '225-Glu-|-Ala-226' and '238-Val-|-Phe-239' bonds), and inhibits vWF-induced platelet aggregation by cleaving GP1BA and vWF. Cleavage of GP1BA occurs at two distinct sites to generate two soluble fragments. It also cleaves alpha- (FGA) and subsequently the gamma-chain (FGG) of fibrinogen, leaving the beta-chain unaffected. It also inhibits collagen-, convulxin- and ristocetin-induced platelet aggregation. It blocks the adhesion of platelet to immobilized collagen, but only exerts a slight inhibition to fibrinogen. In vivo, it exerts potent antithrombotic effect. The chain is Snake venom metalloproteinase kistomin from Calloselasma rhodostoma (Malayan pit viper).